The following is a 506-amino-acid chain: Radiation-sensitive protein 28 (506 aa).

WD repeat units follow at residues 55 to 94, 193 to 233, 285 to 325, 357 to 396, and 404 to 451; these read PLSI…HRND, HHKY…AVQD, RMQS…RLYS, AHLR…LQPE, and LGTQ…LWNK.

It is found in the nucleus. Its function is as follows. Involved in transcription-coupled repair nucleotide excision repair (NER) of UV-induced DNA lesions. The protein is Radiation-sensitive protein 28 (RAD28) of Saccharomyces cerevisiae (strain ATCC 204508 / S288c) (Baker's yeast).